A 46-amino-acid chain; its full sequence is Protein YpdJ (46 aa).

Functionally, may be involved in H(2) production during fermentative growth. This is Protein YpdJ (ypdJ) from Escherichia coli (strain K12).